The chain runs to 156 residues: MSWSKVKYFFFDTPEEKEAAQYGYEKEQTDMKKQQDPPEQQDVTFPKAQPKQNVVSIETAKQSSKVVLLEPRTYSEAQGIADHLKGRRAVVINLQRMSTDQAVRIVDFLSGTVYAIGGDIQKIGPKTFMCTPENVDIVGAISELFGEEEETNIKRW.

Residues 20–36 are compositionally biased toward basic and acidic residues; the sequence is AQYGYEKEQTDMKKQQD. The interval 20-50 is disordered; sequence AQYGYEKEQTDMKKQQDPPEQQDVTFPKAQP.

The protein belongs to the SepF family. In terms of assembly, homodimer. Interacts with FtsZ.

The protein resides in the cytoplasm. In terms of biological role, cell division protein that is part of the divisome complex and is recruited early to the Z-ring. Probably stimulates Z-ring formation, perhaps through the cross-linking of FtsZ protofilaments. Its function overlaps with FtsA. This is Cell division protein SepF from Bacillus cereus (strain G9842).